The sequence spans 164 residues: ATP synthase subunit b (164 aa).

Residues 10–32 (SAAMLMLFVLMVYFLNKFLYTPF) form a helical membrane-spanning segment.

The protein belongs to the ATPase B chain family. F-type ATPases have 2 components, F(1) - the catalytic core - and F(0) - the membrane proton channel. F(1) has five subunits: alpha(3), beta(3), gamma(1), delta(1), epsilon(1). F(0) has three main subunits: a(1), b(2) and c(10-14). The alpha and beta chains form an alternating ring which encloses part of the gamma chain. F(1) is attached to F(0) by a central stalk formed by the gamma and epsilon chains, while a peripheral stalk is formed by the delta and b chains.

Its subcellular location is the cell inner membrane. Functionally, f(1)F(0) ATP synthase produces ATP from ADP in the presence of a proton or sodium gradient. F-type ATPases consist of two structural domains, F(1) containing the extramembraneous catalytic core and F(0) containing the membrane proton channel, linked together by a central stalk and a peripheral stalk. During catalysis, ATP synthesis in the catalytic domain of F(1) is coupled via a rotary mechanism of the central stalk subunits to proton translocation. In terms of biological role, component of the F(0) channel, it forms part of the peripheral stalk, linking F(1) to F(0). The protein is ATP synthase subunit b of Thermotoga maritima (strain ATCC 43589 / DSM 3109 / JCM 10099 / NBRC 100826 / MSB8).